Reading from the N-terminus, the 388-residue chain is tRNA 2-selenouridine synthase (388 aa).

Residues 15–138 (FTADTPLIDV…ARQFLINTID (124 aa)) enclose the Rhodanese domain. Cys98 serves as the catalytic S-selanylcysteine intermediate.

This sequence belongs to the SelU family. Monomer.

It carries out the reaction 5-methylaminomethyl-2-thiouridine(34) in tRNA + selenophosphate + (2E)-geranyl diphosphate + H2O + H(+) = 5-methylaminomethyl-2-selenouridine(34) in tRNA + (2E)-thiogeraniol + phosphate + diphosphate. The enzyme catalyses 5-methylaminomethyl-2-thiouridine(34) in tRNA + (2E)-geranyl diphosphate = 5-methylaminomethyl-S-(2E)-geranyl-thiouridine(34) in tRNA + diphosphate. It catalyses the reaction 5-methylaminomethyl-S-(2E)-geranyl-thiouridine(34) in tRNA + selenophosphate + H(+) = 5-methylaminomethyl-2-(Se-phospho)selenouridine(34) in tRNA + (2E)-thiogeraniol. The catalysed reaction is 5-methylaminomethyl-2-(Se-phospho)selenouridine(34) in tRNA + H2O = 5-methylaminomethyl-2-selenouridine(34) in tRNA + phosphate. In terms of biological role, involved in the post-transcriptional modification of the uridine at the wobble position (U34) of tRNA(Lys), tRNA(Glu) and tRNA(Gln). Catalyzes the conversion of 2-thiouridine (S2U-RNA) to 2-selenouridine (Se2U-RNA). Acts in a two-step process involving geranylation of 2-thiouridine (S2U) to S-geranyl-2-thiouridine (geS2U) and subsequent selenation of the latter derivative to 2-selenouridine (Se2U) in the tRNA chain. In Nitrosomonas eutropha (strain DSM 101675 / C91 / Nm57), this protein is tRNA 2-selenouridine synthase.